The following is a 241-amino-acid chain: Phycocyanobilin:ferredoxin oxidoreductase (241 aa).

Belongs to the HY2 family.

The enzyme catalyses (2R,3Z)-phycocyanobilin + 4 oxidized [2Fe-2S]-[ferredoxin] = biliverdin IXalpha + 4 reduced [2Fe-2S]-[ferredoxin] + 4 H(+). Its function is as follows. Catalyzes the four-electron reduction of biliverdin IX-alpha (2-electron reduction at both the A and D rings); the reaction proceeds via an isolatable 2-electron intermediate, 181,182-dihydrobiliverdin. The polypeptide is Phycocyanobilin:ferredoxin oxidoreductase (Prochlorococcus marinus (strain MIT 9215)).